A 78-amino-acid polypeptide reads, in one-letter code: ATP synthase subunit a (78 aa).

3 helical membrane-spanning segments follow: residues 13–33, 35–55, and 57–77; these read LFGN…LGTS, FLGA…GMFI, and SLQA…KVEA.

It belongs to the ATPase A chain family. F-type ATPases have 2 components, CF(1) - the catalytic core - and CF(0) - the membrane proton channel. CF(1) has five subunits: alpha(3), beta(3), gamma(1), delta(1), epsilon(1). CF(0) has three main subunits: a(1), b(2) and c(9-12). The alpha and beta chains form an alternating ring which encloses part of the gamma chain. CF(1) is attached to CF(0) by a central stalk formed by the gamma and epsilon chains, while a peripheral stalk is formed by the delta and b chains.

The protein resides in the cell membrane. Functionally, key component of the proton channel; it plays a direct role in the translocation of protons across the membrane. In Alkalihalobacillus alcalophilus (Bacillus alcalophilus), this protein is ATP synthase subunit a (atpB).